We begin with the raw amino-acid sequence, 1413 residues long: DNA-directed RNA polymerase subunit beta' (1413 aa).

Residues C70, C72, C85, and C88 each contribute to the Zn(2+) site. Positions 460, 462, and 464 each coordinate Mg(2+). Zn(2+) is bound by residues C819, C893, C900, and C903.

It belongs to the RNA polymerase beta' chain family. The RNAP catalytic core consists of 2 alpha, 1 beta, 1 beta' and 1 omega subunit. When a sigma factor is associated with the core the holoenzyme is formed, which can initiate transcription. Requires Mg(2+) as cofactor. The cofactor is Zn(2+).

It catalyses the reaction RNA(n) + a ribonucleoside 5'-triphosphate = RNA(n+1) + diphosphate. DNA-dependent RNA polymerase catalyzes the transcription of DNA into RNA using the four ribonucleoside triphosphates as substrates. In Burkholderia multivorans (strain ATCC 17616 / 249), this protein is DNA-directed RNA polymerase subunit beta'.